Consider the following 193-residue polypeptide: Orotate phosphoribosyltransferase (193 aa).

5-phospho-alpha-D-ribose 1-diphosphate-binding positions include Arg-107, Lys-108, Lys-111, His-113, and 133–141 (EDVITSGGS). Residues Thr-137 and Arg-165 each contribute to the orotate site.

The protein belongs to the purine/pyrimidine phosphoribosyltransferase family. PyrE subfamily. Homodimer. The cofactor is Mg(2+).

It carries out the reaction orotidine 5'-phosphate + diphosphate = orotate + 5-phospho-alpha-D-ribose 1-diphosphate. Its pathway is pyrimidine metabolism; UMP biosynthesis via de novo pathway; UMP from orotate: step 1/2. In terms of biological role, catalyzes the transfer of a ribosyl phosphate group from 5-phosphoribose 1-diphosphate to orotate, leading to the formation of orotidine monophosphate (OMP). The chain is Orotate phosphoribosyltransferase from Rhodopirellula baltica (strain DSM 10527 / NCIMB 13988 / SH1).